The following is a 69-amino-acid chain: Arabinogalactan protein 24 (69 aa).

The signal sequence occupies residues 1–25 (MMMMTKMFVQIAVVCLLATMAVVSA). Pro34, Pro36, Pro38, and Pro40 each carry 4-hydroxyproline. O-linked (Ara...) hydroxyproline glycans are attached at residues Pro34, Pro36, Pro38, and Pro40. Residue Ser42 is the site of GPI-anchor amidated serine attachment. Residues 43-69 (SSTVVSATNMFTVLAIAAVALVVGSNH) constitute a propeptide, removed in mature form.

This sequence belongs to the AG-peptide AGP family. Contains 4-hydroxyproline; hydroxylated on Pro-34, Pro-36, Pro-38 and Pro-40. In terms of processing, O-glycosylated on hydroxyprolines; noncontiguous hydroxylproline residues are glycosylated with arabinogalactan.

Its subcellular location is the cell membrane. Functionally, proteoglycan that seems to be implicated in diverse developmental roles such as differentiation, cell-cell recognition, embryogenesis and programmed cell death. This is Arabinogalactan protein 24 from Arabidopsis thaliana (Mouse-ear cress).